A 138-amino-acid polypeptide reads, in one-letter code: MVKLIPRISSRRNGRIRLRKNKHKIPQGVIHIQASLQNTIVTVTDVRGRVVSWASAGSAGFKGTTRRTPFAAQTAATNAIHTAINQGMREADVLIKGPGLGRDAALRAIRRSGIRLELILDVTPMPHNGCRPPKKRRV.

This sequence belongs to the universal ribosomal protein uS11 family. Part of the 30S ribosomal subunit.

Its subcellular location is the plastid. The polypeptide is Small ribosomal subunit protein uS11c (Cuscuta obtusiflora (Peruvian dodder)).